Reading from the N-terminus, the 208-residue chain is Large ribosomal subunit protein uL3 (208 aa).

A disordered region spans residues 117–149 (FQGVIKRHGQSRGPMAHGSRYHRRPGSMGPVSP).

It belongs to the universal ribosomal protein uL3 family. As to quaternary structure, part of the 50S ribosomal subunit. Forms a cluster with proteins L14 and L19.

One of the primary rRNA binding proteins, it binds directly near the 3'-end of the 23S rRNA, where it nucleates assembly of the 50S subunit. In Streptococcus equi subsp. equi (strain 4047), this protein is Large ribosomal subunit protein uL3.